The sequence spans 188 residues: FMN-dependent NADPH-azoreductase (188 aa).

This sequence belongs to the azoreductase type 2 family. Homotetramer. The cofactor is FMN.

Its function is as follows. Catalyzes the reductive cleavage of azo bond in aromatic azo compounds to the corresponding amines. Requires NADPH, but not NADH, as an electron donor for its activity. This Staphylococcus aureus (strain MSSA476) protein is FMN-dependent NADPH-azoreductase (azo1).